The chain runs to 318 residues: Transcription factor MYBS3 (318 aa).

Disordered stretches follow at residues 1 to 20 (MTRR…TCPN) and 50 to 98 (AAGS…PWTE). Residues 3-20 (RRCSHCSHNGHNSRTCPN) form a CCHC-type zinc finger. Over residues 8 to 18 (CSHNGHNSRTC) the composition is skewed to polar residues. Residues 50-77 (AAGSTSGGASPADGPDAAPTAADGYASD) are compositionally biased toward low complexity. In terms of domain architecture, HTH myb-type spans 88-144 (RDRKKGVPWTEEEHRRFLLGLQKLGKGDWRGISRNFVVSRTPTQVASHAQKYFIRQS). A DNA-binding region (H-T-H motif) is located at residues 116-140 (WRGISRNFVVSRTPTQVASHAQKYF). The segment at 159 to 200 (VPDESMDLPPLPGGQEPETQVLNQPALPPPREEEEVDSMESD) is disordered.

Expressed in all tissues, with the highest level in senescent leaves.

The protein localises to the nucleus. In terms of biological role, transcription repressor that binds to 5'-TATCCA-3' elements in gene promoters. Contributes to the sugar-repressed transcription of promoters containing SRS or 5'-TATCCA-3' elements. Transcription repressor involved in a cold stress response pathway that confers cold tolerance. Suppresses the DREB1-dependent signaling pathway under prolonged cold stress. DREB1 responds quickly and transiently while MYBS3 responds slowly to cold stress. They may act sequentially and complementarily for adaptation to short- and long-term cold stress. This Oryza sativa subsp. japonica (Rice) protein is Transcription factor MYBS3.